The following is a 359-amino-acid chain: Protein FAM50 homolog (359 aa).

2 disordered regions span residues 122–150 (NLDDDEEEEEEDDEDHDKKQLKIKQEDQP) and 339–359 (PYDPTKSYDKYTIKDKDKSKK). Residues 123–136 (LDDDEEEEEEDDED) are compositionally biased toward acidic residues. Residues 137 to 150 (HDKKQLKIKQEDQP) show a composition bias toward basic and acidic residues.

This sequence belongs to the FAM50 family.

This is Protein FAM50 homolog from Drosophila melanogaster (Fruit fly).